The following is a 1108-amino-acid chain: Topless-related protein 3 (1108 aa).

The LisH domain occupies 4–36 (LSRELVFLILQFLEEEKFKESVHRLEKESGFFF). The region spanning 34 to 92 (FFFNTKYFDEKVLAGEWDDVETYLSGFTKVDDNRYSMKIFFEIRKQKYLEALDRQEKAK) is the CTLH domain. Ser-214 carries the phosphoserine modification. WD repeat units lie at residues 343-383 (HQGS…RLVS), 405-444 (ETPISVTRVAWSPDGNFIGVAFTKHLIQLYAFSGPNDLRQ), 450-491 (AHVG…HFTF), 493-534 (GHDA…SRVD), 583-623 (EFQK…VLTS), and 628-667 (GGLPALPHLRFNKDGNLLAVTTADNGFKILANPAGFRSLR). The disordered stretch occupies residues 706–725 (HSQMLNGVDPSKSRIDDSTD). The segment covering 716-725 (SKSRIDDSTD) has biased composition (basic and acidic residues). WD repeat units lie at residues 751–790 (GSSTKVVQLLYTNSGAGILALGSNGIQRLWKWVPNEQNPS), 818–856 (NLENAAPCIALSKNDSYVMSAAGGKVSLFNMMTFKVMTT), 859–899 (PPPP…VKSK), 902–941 (GHQKRITGLAFSTALNILVSSGADAQICFWSIDTWEKRKS), and 994–1033 (SLSAPISSAVYACNSQLIYTTFRDGNIGVFDADSLRLRCR). The tract at residues 1084–1108 (GMIPPSEAINSPSTTSNQTPEQLQR) is disordered. A compositionally biased stretch (polar residues) spans 1091–1108 (AINSPSTTSNQTPEQLQR).

As to quaternary structure, tetramer. Interacts with NINJA/AFPH2. Interacts with SMXL6. Interacts with SPL (via EAR motif). Interacts with SPEAR3/TIE1.

The protein resides in the nucleus. In terms of biological role, transcriptional corepressor. Negative regulator of jasmonate responses. The sequence is that of Topless-related protein 3 (TPR3) from Arabidopsis thaliana (Mouse-ear cress).